The following is a 194-amino-acid chain: Adenylate kinase (194 aa).

10–15 serves as a coordination point for ATP; it reads GAGKGT. Residues 30–59 are NMP; it reads STGDMLRAAVAQQSEIGKRAKAVMDAGQLV. Residues threonine 31, arginine 36, 57–59, 85–88, and glutamine 92 each bind AMP; these read QLV and GYPR. The interval 126-142 is LID; it reads SRVAETIAKGAQVRSDD. Arginine 127 serves as a coordination point for ATP. AMP-binding residues include arginine 139 and arginine 150. Residue alanine 178 coordinates ATP.

It belongs to the adenylate kinase family. Monomer.

Its subcellular location is the cytoplasm. The catalysed reaction is AMP + ATP = 2 ADP. It participates in purine metabolism; AMP biosynthesis via salvage pathway; AMP from ADP: step 1/1. Functionally, catalyzes the reversible transfer of the terminal phosphate group between ATP and AMP. Plays an important role in cellular energy homeostasis and in adenine nucleotide metabolism. This Brucella melitensis biotype 1 (strain ATCC 23456 / CCUG 17765 / NCTC 10094 / 16M) protein is Adenylate kinase.